A 421-amino-acid chain; its full sequence is ATP-dependent RNA helicase RhlB (421 aa).

The Q motif signature appears at 9–37 (QKFSDFALHPQVVEALEKKGFYNCTPIQA). A Helicase ATP-binding domain is found at 40 to 219 (LPLTLAGRDV…FEQMNNAEYV (180 aa)). Position 53 to 60 (53 to 60 (AQTGTGKT)) interacts with ATP. Positions 165–168 (DEAD) match the DEAD box motif. A Helicase C-terminal domain is found at 245 to 390 (RLLQTLIEEE…VSKYNPEALM (146 aa)). A disordered region spans residues 396-421 (PLRLTRSRPGNGPRRAGAPRNRRRSG). Low complexity predominate over residues 402–414 (SRPGNGPRRAGAP).

The protein belongs to the DEAD box helicase family. RhlB subfamily. In terms of assembly, component of the RNA degradosome, which is a multiprotein complex involved in RNA processing and mRNA degradation.

It is found in the cytoplasm. It catalyses the reaction ATP + H2O = ADP + phosphate + H(+). Functionally, DEAD-box RNA helicase involved in RNA degradation. Has RNA-dependent ATPase activity and unwinds double-stranded RNA. In Salmonella paratyphi A (strain AKU_12601), this protein is ATP-dependent RNA helicase RhlB.